A 291-amino-acid polypeptide reads, in one-letter code: G1/S-specific cyclin-D2 (291 aa).

The tract at residues 261–291 is disordered; that stretch reads TRQQTQQRNSSKSVDELDQASTPTDVQDINL. The segment covering 279 to 291 has biased composition (polar residues); it reads QASTPTDVQDINL. Residue threonine 282 is modified to Phosphothreonine.

This sequence belongs to the cyclin family. Cyclin D subfamily. In terms of assembly, interacts with the cdk4 and cdk6 protein kinases to form a serine/threonine kinase holoenzyme complex. The cyclin subunit imparts substrate specificity to the complex. In terms of processing, phosphorylation at Thr-282 by MAP kinases is required for ubiquitination and degradation by the DCX(AMBRA1) complex. Post-translationally, ubiquitinated by the DCX(AMBRA1) complex during the transition from G1 to S cell phase, leading to its degradation: ubiquitination is dependent on Thr-282 phosphorylation. The DCX(AMBRA1) complex represents the major regulator of CCND2 stability during the G1/S transition.

It is found in the nucleus. Its subcellular location is the cytoplasm. The protein localises to the nucleus membrane. Regulatory component of the cyclin D2-CDK4 (DC) complex that phosphorylates and inhibits members of the retinoblastoma (RB) protein family including RB1 and regulates the cell-cycle during G(1)/S transition. Phosphorylation of RB1 allows dissociation of the transcription factor E2F from the RB/E2F complex and the subsequent transcription of E2F target genes which are responsible for the progression through the G(1) phase. Hypophosphorylates RB1 in early G(1) phase. Cyclin D-CDK4 complexes are major integrators of various mitogenenic and antimitogenic signals. This is G1/S-specific cyclin-D2 (ccnd2) from Xenopus laevis (African clawed frog).